The sequence spans 66 residues: UPF0370 protein YpfN (66 aa).

A helical transmembrane segment spans residues 4–24 (LAKYWWILVLVFLVGVLLNVI). Residues 39–66 (KPELPPHRDFNDKWDDEDGWPKKDQPKK) form a disordered region. Residues 42 to 66 (LPPHRDFNDKWDDEDGWPKKDQPKK) are compositionally biased toward basic and acidic residues.

This sequence belongs to the UPF0370 family.

The protein localises to the cell membrane. This is UPF0370 protein YpfN from Salmonella paratyphi B (strain ATCC BAA-1250 / SPB7).